Reading from the N-terminus, the 475-residue chain is MVVGDIATGTELLVIGAGPGGYVAAIRAAQNGIDTTLVEKDAYGGTCLNYGCIPSKALITGANLAHEAGNAEEMGIHADPVVDMSQLRDWKSGVVDQLTGGVEKLCKANGVNLVEGTARFKDENAVRIAHGGEGQGSETIEFEHCIIATGSRVIQIPGFDFGDEPVWSSRDALEADTVPERLVVVGGGYIGMELSTTFAKLGADVTVVEMLDDILPGYESDVARVVRKRAEELGIDMHLGEGASGWREEDDGIMVTTETEDGEENEYRADKVLVAVGRSPVTDTMDIENAGLEADDRGFLSVDDRRRTDVEHIYAVGDVVEDTPMLAHVASKEGIVAAEHVAGEPVAFDSQAVPAAVFTDPEIGTVGMTEADAEEAGFTPVVGQMPFRASGRALTTNHADGFVRVVADEESGFVLGAQIVGPEASELIAELAFAIEMGATLEDVASTIHTHPTLAEAVMEAAENALGQAIHTLNR.

FAD-binding positions include 39–47, Lys-56, and Ala-118; that span reads EKDAYGGTC. Cys-47 and Cys-52 are oxidised to a cystine. NAD(+) contacts are provided by residues 186 to 190, Glu-209, and 275 to 278; these read GGGYI and AVGR. Asp-318 and Ala-327 together coordinate FAD. Catalysis depends on His-451, which acts as the Proton acceptor.

The protein belongs to the class-I pyridine nucleotide-disulfide oxidoreductase family. In terms of assembly, homodimer. FAD serves as cofactor.

The protein localises to the cytoplasm. The enzyme catalyses N(6)-[(R)-dihydrolipoyl]-L-lysyl-[protein] + NAD(+) = N(6)-[(R)-lipoyl]-L-lysyl-[protein] + NADH + H(+). The sequence is that of Dihydrolipoyl dehydrogenase (lpdA) from Haloferax volcanii (strain ATCC 29605 / DSM 3757 / JCM 8879 / NBRC 14742 / NCIMB 2012 / VKM B-1768 / DS2) (Halobacterium volcanii).